A 308-amino-acid polypeptide reads, in one-letter code: tRNA dimethylallyltransferase (308 aa).

17-24 (GPTGSGKS) is an ATP binding site. Position 19 to 24 (19 to 24 (TGSGKS)) interacts with substrate.

This sequence belongs to the IPP transferase family. As to quaternary structure, monomer. The cofactor is Mg(2+).

It catalyses the reaction adenosine(37) in tRNA + dimethylallyl diphosphate = N(6)-dimethylallyladenosine(37) in tRNA + diphosphate. Its function is as follows. Catalyzes the transfer of a dimethylallyl group onto the adenine at position 37 in tRNAs that read codons beginning with uridine, leading to the formation of N6-(dimethylallyl)adenosine (i(6)A). The sequence is that of tRNA dimethylallyltransferase from Paenarthrobacter aurescens (strain TC1).